A 565-amino-acid polypeptide reads, in one-letter code: Periplasmic trehalase (565 aa).

Positions 1 to 30 (MKSPAPSRPQKMALIPACIFLCFAALSVQA) are cleaved as a signal peptide. Substrate-binding positions include arginine 152, 159-160 (WD), asparagine 196, 205-207 (RSQ), 277-279 (RPE), and glycine 310. Catalysis depends on proton donor/acceptor residues aspartate 312 and glutamate 496. Residue glutamate 511 coordinates substrate. The disordered stretch occupies residues 539–565 (CDNVPATRPLSESTTQPVKQKEAEPTP).

It belongs to the glycosyl hydrolase 37 family. As to quaternary structure, monomer.

It localises to the periplasm. It carries out the reaction alpha,alpha-trehalose + H2O = alpha-D-glucose + beta-D-glucose. In terms of biological role, provides the cells with the ability to utilize trehalose at high osmolarity by splitting it into glucose molecules that can subsequently be taken up by the phosphotransferase-mediated uptake system. In Escherichia coli O17:K52:H18 (strain UMN026 / ExPEC), this protein is Periplasmic trehalase.